The sequence spans 232 residues: Thiamine import ATP-binding protein ThiQ (232 aa).

In terms of domain architecture, ABC transporter spans 2–230 (LKLTDITWLY…KASASALLGI (229 aa)). Residue 32–39 (GPSGAGKS) coordinates ATP.

It belongs to the ABC transporter superfamily. Thiamine importer (TC 3.A.1.19.1) family. As to quaternary structure, the complex is composed of two ATP-binding proteins (ThiQ), two transmembrane proteins (ThiP) and a solute-binding protein (ThiB).

It localises to the cell inner membrane. The enzyme catalyses thiamine(out) + ATP + H2O = thiamine(in) + ADP + phosphate + H(+). Part of the ABC transporter complex ThiBPQ involved in thiamine import. Responsible for energy coupling to the transport system. This chain is Thiamine import ATP-binding protein ThiQ, found in Escherichia coli O157:H7.